The primary structure comprises 193 residues: dCTP deaminase (193 aa).

Residues 110–115, aspartate 128, 136–138, tyrosine 171, lysine 178, and glutamine 182 each bind dCTP; these read RSSLAR and VLE. The Proton donor/acceptor role is filled by glutamate 138. Residues 174-193 form a disordered region; it reads RKSAKYKDQQEAVASRISQD.

It belongs to the dCTP deaminase family. As to quaternary structure, homotrimer.

It catalyses the reaction dCTP + H2O + H(+) = dUTP + NH4(+). Its pathway is pyrimidine metabolism; dUMP biosynthesis; dUMP from dCTP (dUTP route): step 1/2. Catalyzes the deamination of dCTP to dUTP. The sequence is that of dCTP deaminase from Shewanella baltica (strain OS223).